The sequence spans 104 residues: UPF0212 protein PH1312 (104 aa).

Belongs to the UPF0212 family.

The protein is UPF0212 protein PH1312 of Pyrococcus horikoshii (strain ATCC 700860 / DSM 12428 / JCM 9974 / NBRC 100139 / OT-3).